Consider the following 132-residue polypeptide: Small ribosomal subunit protein uS8 (132 aa).

Belongs to the universal ribosomal protein uS8 family. Part of the 30S ribosomal subunit. Contacts proteins S5 and S12.

Functionally, one of the primary rRNA binding proteins, it binds directly to 16S rRNA central domain where it helps coordinate assembly of the platform of the 30S subunit. The chain is Small ribosomal subunit protein uS8 from Clostridium tetani (strain Massachusetts / E88).